Reading from the N-terminus, the 504-residue chain is WD repeat-containing protein 55 homolog (504 aa).

2 disordered regions span residues 1–21 (MDRHEHFKAPANEDELDDIDD) and 33–132 (QEVL…DDDD). 2 stretches are compositionally biased toward acidic residues: residues 12 to 21 (NEDELDDIDD) and 33 to 48 (QEVLNESESDDDEYDL). The span at 63-74 (SSSNESISSDGS) shows a compositional bias: low complexity. A compositionally biased stretch (acidic residues) spans 78–89 (NAEDSDSDDSMI). 6 WD repeats span residues 156–195 (KLEDFITDICFHPDRDIIALATIIGDVHLYEYGNEENKLL), 200–239 (VHAKACRDVEFTEDGRSLITCSKDKCVMVTDMETEKLKKL), 243–281 (AHDDAINKLHVLDERLFATGDDAGTVKLWDFRTKDAIFE), 284–323 (EVEDQITQMLTNEQNKLLLATSADGYLTTYNIGARKLYVQ), 326–365 (PYEEELNCMGIYRGSSKLVAGTSKGRLYTYNWGYFGYHCD), and 410–449 (QHNMPIESLDINCSGELLASSSHNNDVRFWNVKYFEDFGD). The tract at residues 477-504 (FFADMTKDQDDDDNDGGNDTAAGPSNVT) is disordered.

The protein belongs to the WD repeat WDR55 family.

The polypeptide is WD repeat-containing protein 55 homolog (Drosophila virilis (Fruit fly)).